We begin with the raw amino-acid sequence, 623 residues long: Glutamine--fructose-6-phosphate aminotransferase [isomerizing] (623 aa).

The active-site Nucleophile; for GATase activity is the Cys2. One can recognise a Glutamine amidotransferase type-2 domain in the interval 2 to 228 (CGIVGYIGQA…NDQVVTITAD (227 aa)). SIS domains are found at residues 295 to 435 (IDEA…LRGN) and 468 to 613 (LGQD…VDQP). The active-site For Fru-6P isomerization activity is the Lys618.

As to quaternary structure, homodimer.

The protein localises to the cytoplasm. The catalysed reaction is D-fructose 6-phosphate + L-glutamine = D-glucosamine 6-phosphate + L-glutamate. Its function is as follows. Catalyzes the first step in hexosamine metabolism, converting fructose-6P into glucosamine-6P using glutamine as a nitrogen source. In Corynebacterium glutamicum (strain ATCC 13032 / DSM 20300 / JCM 1318 / BCRC 11384 / CCUG 27702 / LMG 3730 / NBRC 12168 / NCIMB 10025 / NRRL B-2784 / 534), this protein is Glutamine--fructose-6-phosphate aminotransferase [isomerizing].